A 699-amino-acid chain; its full sequence is Elongation factor G (699 aa).

The tr-type G domain occupies 8–290 (NRYRNIGICA…AVIEFLPAPD (283 aa)). Residues 17–24 (AHVDAGKT), 88–92 (DTPGH), and 142–145 (NKMD) contribute to the GTP site.

Belongs to the TRAFAC class translation factor GTPase superfamily. Classic translation factor GTPase family. EF-G/EF-2 subfamily.

It localises to the cytoplasm. Functionally, catalyzes the GTP-dependent ribosomal translocation step during translation elongation. During this step, the ribosome changes from the pre-translocational (PRE) to the post-translocational (POST) state as the newly formed A-site-bound peptidyl-tRNA and P-site-bound deacylated tRNA move to the P and E sites, respectively. Catalyzes the coordinated movement of the two tRNA molecules, the mRNA and conformational changes in the ribosome. The protein is Elongation factor G of Alcanivorax borkumensis (strain ATCC 700651 / DSM 11573 / NCIMB 13689 / SK2).